Reading from the N-terminus, the 344-residue chain is tRNA N6-adenosine threonylcarbamoyltransferase (344 aa).

Residues His-110 and His-114 each coordinate Fe cation. Residues 133 to 137 (AVSGA), Asp-166, Gly-179, and Asn-278 each bind substrate. Asp-303 lines the Fe cation pocket.

Belongs to the KAE1 / TsaD family. The cofactor is Fe(2+).

It localises to the cytoplasm. It carries out the reaction L-threonylcarbamoyladenylate + adenosine(37) in tRNA = N(6)-L-threonylcarbamoyladenosine(37) in tRNA + AMP + H(+). Its function is as follows. Required for the formation of a threonylcarbamoyl group on adenosine at position 37 (t(6)A37) in tRNAs that read codons beginning with adenine. Is involved in the transfer of the threonylcarbamoyl moiety of threonylcarbamoyl-AMP (TC-AMP) to the N6 group of A37, together with TsaE and TsaB. TsaD likely plays a direct catalytic role in this reaction. The sequence is that of tRNA N6-adenosine threonylcarbamoyltransferase from Chlamydia caviae (strain ATCC VR-813 / DSM 19441 / 03DC25 / GPIC) (Chlamydophila caviae).